Here is a 350-residue protein sequence, read N- to C-terminus: Probable dTDP-glucose 4,6-dehydratase (350 aa).

7–13 (GGAGFIG) is a binding site for NAD(+). Residue threonine 132 coordinates substrate. Aspartate 133 acts as the Proton donor in catalysis. Catalysis depends on proton acceptor residues glutamate 134 and tyrosine 157.

Belongs to the NAD(P)-dependent epimerase/dehydratase family. dTDP-glucose dehydratase subfamily. It depends on NAD(+) as a cofactor.

The catalysed reaction is dTDP-alpha-D-glucose = dTDP-4-dehydro-6-deoxy-alpha-D-glucose + H2O. Its pathway is carbohydrate biosynthesis; dTDP-L-rhamnose biosynthesis. The sequence is that of Probable dTDP-glucose 4,6-dehydratase from Sinorhizobium fredii (strain NBRC 101917 / NGR234).